A 142-amino-acid polypeptide reads, in one-letter code: Small ribosomal subunit protein bS6 (142 aa).

Positions 96-142 are disordered; it reads VTGQSEMLKAEENRSERRERRERPEHDGSADGDDSDSDSDNSDNADE. Basic and acidic residues predominate over residues 103–124; that stretch reads LKAEENRSERRERRERPEHDGS. A compositionally biased stretch (acidic residues) spans 125–142; it reads ADGDDSDSDSDNSDNADE.

This sequence belongs to the bacterial ribosomal protein bS6 family.

Functionally, binds together with bS18 to 16S ribosomal RNA. In Pseudomonas fluorescens (strain Pf0-1), this protein is Small ribosomal subunit protein bS6.